We begin with the raw amino-acid sequence, 186 residues long: 3-hydroxyanthranilate 3,4-dioxygenase (186 aa).

Position 44 (Arg-44) interacts with O2. The Fe cation site is built by His-48, Glu-54, and His-96. Glu-54 contacts substrate. Residues Arg-100 and Glu-110 each coordinate substrate. Cys-125, Cys-130, Cys-164, and Cys-167 together coordinate a divalent metal cation.

Belongs to the 3-HAO family. It depends on Fe(2+) as a cofactor.

The protein localises to the cytoplasm. It catalyses the reaction 3-hydroxyanthranilate + O2 = (2Z,4Z)-2-amino-3-carboxymuconate 6-semialdehyde. It participates in cofactor biosynthesis; NAD(+) biosynthesis; quinolinate from L-kynurenine: step 3/3. In terms of biological role, catalyzes the oxidative ring opening of 3-hydroxyanthranilate to 2-amino-3-carboxymuconate semialdehyde, which spontaneously cyclizes to quinolinate. The polypeptide is 3-hydroxyanthranilate 3,4-dioxygenase (Chaetomium globosum (strain ATCC 6205 / CBS 148.51 / DSM 1962 / NBRC 6347 / NRRL 1970) (Soil fungus)).